Reading from the N-terminus, the 542-residue chain is Chaperonin GroEL (542 aa).

ATP contacts are provided by residues 29-32 (TLGP), K50, 86-90 (DGTTT), G415, and D495.

Belongs to the chaperonin (HSP60) family. As to quaternary structure, forms a cylinder of 14 subunits composed of two heptameric rings stacked back-to-back. Interacts with the co-chaperonin GroES.

The protein resides in the cytoplasm. The enzyme catalyses ATP + H2O + a folded polypeptide = ADP + phosphate + an unfolded polypeptide.. Together with its co-chaperonin GroES, plays an essential role in assisting protein folding. The GroEL-GroES system forms a nano-cage that allows encapsulation of the non-native substrate proteins and provides a physical environment optimized to promote and accelerate protein folding. This chain is Chaperonin GroEL, found in Azobacteroides pseudotrichonymphae genomovar. CFP2.